A 457-amino-acid chain; its full sequence is ATP synthase subunit beta (457 aa).

147–154 (GGAGVGKT) provides a ligand contact to ATP.

It belongs to the ATPase alpha/beta chains family. F-type ATPases have 2 components, CF(1) - the catalytic core - and CF(0) - the membrane proton channel. CF(1) has five subunits: alpha(3), beta(3), gamma(1), delta(1), epsilon(1). CF(0) has three main subunits: a(1), b(2) and c(9-12). The alpha and beta chains form an alternating ring which encloses part of the gamma chain. CF(1) is attached to CF(0) by a central stalk formed by the gamma and epsilon chains, while a peripheral stalk is formed by the delta and b chains.

The protein resides in the cell inner membrane. It carries out the reaction ATP + H2O + 4 H(+)(in) = ADP + phosphate + 5 H(+)(out). Its function is as follows. Produces ATP from ADP in the presence of a proton gradient across the membrane. The catalytic sites are hosted primarily by the beta subunits. This chain is ATP synthase subunit beta, found in Histophilus somni (strain 2336) (Haemophilus somnus).